Reading from the N-terminus, the 328-residue chain is Cytochrome f (328 aa).

An N-terminal signal peptide occupies residues 1–44; it reads MRTPDFSAIWQASKQLTARIILLAFATFALYVFHDLAFPQGAAA. Heme contacts are provided by Y45, C66, C69, and H70. The chain crosses the membrane as a helical span at residues 294-314; sequence IKGLMVFLAGIMLAQILLVIK.

The protein belongs to the cytochrome f family. The 4 large subunits of the cytochrome b6-f complex are cytochrome b6, subunit IV (17 kDa polypeptide, PetD), cytochrome f and the Rieske protein, while the 4 small subunits are PetG, PetL, PetM and PetN. The complex functions as a dimer. It depends on heme as a cofactor.

Its subcellular location is the cellular thylakoid membrane. Component of the cytochrome b6-f complex, which mediates electron transfer between photosystem II (PSII) and photosystem I (PSI), cyclic electron flow around PSI, and state transitions. The chain is Cytochrome f from Rippkaea orientalis (strain PCC 8801 / RF-1) (Cyanothece sp. (strain PCC 8801)).